A 460-amino-acid polypeptide reads, in one-letter code: Proline--tRNA ligase (460 aa).

This sequence belongs to the class-II aminoacyl-tRNA synthetase family. ProS type 3 subfamily. As to quaternary structure, homodimer.

The protein resides in the cytoplasm. It catalyses the reaction tRNA(Pro) + L-proline + ATP = L-prolyl-tRNA(Pro) + AMP + diphosphate. Functionally, catalyzes the attachment of proline to tRNA(Pro) in a two-step reaction: proline is first activated by ATP to form Pro-AMP and then transferred to the acceptor end of tRNA(Pro). The polypeptide is Proline--tRNA ligase (Methanococcus maripaludis (strain C7 / ATCC BAA-1331)).